Consider the following 109-residue polypeptide: FK506-binding protein (109 aa).

Residues Gly20–Tyr108 enclose the PPIase FKBP-type domain.

The protein belongs to the FKBP-type PPIase family.

It catalyses the reaction [protein]-peptidylproline (omega=180) = [protein]-peptidylproline (omega=0). Functionally, PPIases accelerate the folding of proteins. The protein is FK506-binding protein (fbp) of Neisseria meningitidis serogroup C.